The sequence spans 216 residues: Large ribosomal subunit protein uL3 (216 aa).

At Gln153 the chain carries N5-methylglutamine.

This sequence belongs to the universal ribosomal protein uL3 family. Part of the 50S ribosomal subunit. Forms a cluster with proteins L14 and L19. In terms of processing, methylated by PrmB.

Its function is as follows. One of the primary rRNA binding proteins, it binds directly near the 3'-end of the 23S rRNA, where it nucleates assembly of the 50S subunit. This is Large ribosomal subunit protein uL3 from Burkholderia ambifaria (strain MC40-6).